The sequence spans 453 residues: MIDNDIANQVPKEFSVSEISNKIKELIENNFGHIKVKGEISGLKISSSGHAYFNLKENTAILACTCWRPILVKIKFPLNDGMEVVIGGKLSSYSGNSRYQLSVDNLQPAGLGAMIQILNERKIRLEKEGLFNKKRIPIPFLPDKIGVITSITGAVIKDIIHRIRERCPTRIIIWQVSVQGENSSHEMAEAIEGFNNLEEIHKPSVIIVARGGGSIEDLWSFNDEILVRAAYNSKIPIISAVGHEADYTLIDLAVDKRAPTPTAAAEFAVPVRSILNNTIQSYEKILLNNTNRLIKYHEQSIVNYDKIHRYFAYYINNRQQLLDETGFNLLDVLIRCIALKETKLKSFAKERINYAKIINYKILELTHQTAYLLKSVNNTLKNFEYKLELNSTLLASLDYHNVLKRGFAIVTGDAGNFLSSKSTATNEQSLNIKFFDGEINVVLSSHDLNARSS.

The protein belongs to the XseA family. Heterooligomer composed of large and small subunits.

It is found in the cytoplasm. It catalyses the reaction Exonucleolytic cleavage in either 5'- to 3'- or 3'- to 5'-direction to yield nucleoside 5'-phosphates.. Functionally, bidirectionally degrades single-stranded DNA into large acid-insoluble oligonucleotides, which are then degraded further into small acid-soluble oligonucleotides. In Rickettsia typhi (strain ATCC VR-144 / Wilmington), this protein is Exodeoxyribonuclease 7 large subunit.